The primary structure comprises 890 residues: Alanine--tRNA ligase (890 aa).

Zn(2+) is bound by residues His569, His573, Cys671, and His675.

It belongs to the class-II aminoacyl-tRNA synthetase family. It depends on Zn(2+) as a cofactor.

Its subcellular location is the cytoplasm. It catalyses the reaction tRNA(Ala) + L-alanine + ATP = L-alanyl-tRNA(Ala) + AMP + diphosphate. Functionally, catalyzes the attachment of alanine to tRNA(Ala) in a two-step reaction: alanine is first activated by ATP to form Ala-AMP and then transferred to the acceptor end of tRNA(Ala). Also edits incorrectly charged Ser-tRNA(Ala) and Gly-tRNA(Ala) via its editing domain. This is Alanine--tRNA ligase from Synechococcus sp. (strain CC9902).